The chain runs to 198 residues: Recombination protein RecR (198 aa).

A C4-type zinc finger spans residues 57–72; it reads CSVCGHITENDPCYIC. A Toprim domain is found at 80-175; the sequence is SVICVVEDDK…KVTRLAQGLS (96 aa).

This sequence belongs to the RecR family.

Its function is as follows. May play a role in DNA repair. It seems to be involved in an RecBC-independent recombinational process of DNA repair. It may act with RecF and RecO. This chain is Recombination protein RecR, found in Staphylococcus aureus (strain MRSA252).